A 946-amino-acid polypeptide reads, in one-letter code: Bifunctional glutamine synthetase adenylyltransferase/adenylyl-removing enzyme (946 aa).

An adenylyl removase region spans residues 1–440; the sequence is MKPLSSPLQQ…VFNELIGDDE (440 aa). Positions 449–946 are adenylyl transferase; the sequence is SEQWRELWQD…VSWQKWLVEE (498 aa).

Belongs to the GlnE family. Mg(2+) is required as a cofactor.

The enzyme catalyses [glutamine synthetase]-O(4)-(5'-adenylyl)-L-tyrosine + phosphate = [glutamine synthetase]-L-tyrosine + ADP. It catalyses the reaction [glutamine synthetase]-L-tyrosine + ATP = [glutamine synthetase]-O(4)-(5'-adenylyl)-L-tyrosine + diphosphate. In terms of biological role, involved in the regulation of glutamine synthetase GlnA, a key enzyme in the process to assimilate ammonia. When cellular nitrogen levels are high, the C-terminal adenylyl transferase (AT) inactivates GlnA by covalent transfer of an adenylyl group from ATP to specific tyrosine residue of GlnA, thus reducing its activity. Conversely, when nitrogen levels are low, the N-terminal adenylyl removase (AR) activates GlnA by removing the adenylyl group by phosphorolysis, increasing its activity. The regulatory region of GlnE binds the signal transduction protein PII (GlnB) which indicates the nitrogen status of the cell. In Escherichia coli (strain SMS-3-5 / SECEC), this protein is Bifunctional glutamine synthetase adenylyltransferase/adenylyl-removing enzyme.